Reading from the N-terminus, the 46-residue chain is Large ribosomal subunit protein bL34 (46 aa).

The protein belongs to the bacterial ribosomal protein bL34 family.

The sequence is that of Large ribosomal subunit protein bL34 (rpmH) from Mycobacterium avium.